We begin with the raw amino-acid sequence, 229 residues long: Cytochrome c oxidase subunit 2 (229 aa).

Topologically, residues M1–H26 are mitochondrial intermembrane. Residues T27–N48 form a helical membrane-spanning segment. At K49–E62 the chain is on the mitochondrial matrix side. The chain crosses the membrane as a helical span at residues T63–R82. Residues L83–A229 are Mitochondrial intermembrane-facing. 6 residues coordinate Cu cation: H161, C196, E198, C200, H204, and M207. Residue E198 coordinates Mg(2+).

It belongs to the cytochrome c oxidase subunit 2 family. In terms of assembly, component of the cytochrome c oxidase (complex IV, CIV), a multisubunit enzyme composed of a catalytic core of 3 subunits and several supernumerary subunits. The complex exists as a monomer or a dimer and forms supercomplexes (SCs) in the inner mitochondrial membrane with ubiquinol-cytochrome c oxidoreductase (cytochrome b-c1 complex, complex III, CIII). Cu cation is required as a cofactor.

Its subcellular location is the mitochondrion inner membrane. The enzyme catalyses 4 Fe(II)-[cytochrome c] + O2 + 8 H(+)(in) = 4 Fe(III)-[cytochrome c] + 2 H2O + 4 H(+)(out). Its function is as follows. Component of the cytochrome c oxidase, the last enzyme in the mitochondrial electron transport chain which drives oxidative phosphorylation. The respiratory chain contains 3 multisubunit complexes succinate dehydrogenase (complex II, CII), ubiquinol-cytochrome c oxidoreductase (cytochrome b-c1 complex, complex III, CIII) and cytochrome c oxidase (complex IV, CIV), that cooperate to transfer electrons derived from NADH and succinate to molecular oxygen, creating an electrochemical gradient over the inner membrane that drives transmembrane transport and the ATP synthase. Cytochrome c oxidase is the component of the respiratory chain that catalyzes the reduction of oxygen to water. Electrons originating from reduced cytochrome c in the intermembrane space (IMS) are transferred via the dinuclear copper A center (CU(A)) of subunit 2 and heme A of subunit 1 to the active site in subunit 1, a binuclear center (BNC) formed by heme A3 and copper B (CU(B)). The BNC reduces molecular oxygen to 2 water molecules using 4 electrons from cytochrome c in the IMS and 4 protons from the mitochondrial matrix. This is Cytochrome c oxidase subunit 2 (COII) from Sympetrum striolatum (Common darter dragonfly).